Consider the following 415-residue polypeptide: Adenylosuccinate synthetase (415 aa).

GTP-binding positions include 11–17 (GDEGKGK) and 39–41 (GHT). D12 serves as the catalytic Proton acceptor. Positions 12 and 39 each coordinate Mg(2+). IMP is bound by residues 12 to 15 (DEGK), 37 to 40 (NAGH), T124, R138, Q218, T233, and R297. The active-site Proton donor is H40. 293–299 (TTTGRAR) lines the substrate pocket. Residues R299, 325-327 (KLD), and 403-405 (STS) each bind GTP.

It belongs to the adenylosuccinate synthetase family. Homodimer. Mg(2+) is required as a cofactor.

Its subcellular location is the cytoplasm. It catalyses the reaction IMP + L-aspartate + GTP = N(6)-(1,2-dicarboxyethyl)-AMP + GDP + phosphate + 2 H(+). Its pathway is purine metabolism; AMP biosynthesis via de novo pathway; AMP from IMP: step 1/2. Plays an important role in the de novo pathway of purine nucleotide biosynthesis. Catalyzes the first committed step in the biosynthesis of AMP from IMP. The chain is Adenylosuccinate synthetase from Helicobacter hepaticus (strain ATCC 51449 / 3B1).